Consider the following 95-residue polypeptide: Large ribosomal subunit protein bL25 (95 aa).

It belongs to the bacterial ribosomal protein bL25 family. In terms of assembly, part of the 50S ribosomal subunit; part of the 5S rRNA/L5/L18/L25 subcomplex. Contacts the 5S rRNA. Binds to the 5S rRNA independently of L5 and L18.

Its function is as follows. This is one of the proteins that binds to the 5S RNA in the ribosome where it forms part of the central protuberance. The chain is Large ribosomal subunit protein bL25 from Actinobacillus pleuropneumoniae serotype 5b (strain L20).